Reading from the N-terminus, the 228-residue chain is Putative adhesin A1I_01215 (228 aa).

A signal peptide spans 1–22 (MKKLLLIAATSATVLSSALSFA).

The chain is Putative adhesin A1I_01215 from Rickettsia bellii (strain OSU 85-389).